The following is a 204-amino-acid chain: Probable nicotinate-nucleotide adenylyltransferase (204 aa).

Belongs to the NadD family.

It catalyses the reaction nicotinate beta-D-ribonucleotide + ATP + H(+) = deamido-NAD(+) + diphosphate. Its pathway is cofactor biosynthesis; NAD(+) biosynthesis; deamido-NAD(+) from nicotinate D-ribonucleotide: step 1/1. Catalyzes the reversible adenylation of nicotinate mononucleotide (NaMN) to nicotinic acid adenine dinucleotide (NaAD). The polypeptide is Probable nicotinate-nucleotide adenylyltransferase (Dehalococcoides mccartyi (strain ATCC BAA-2100 / JCM 16839 / KCTC 5957 / BAV1)).